The primary structure comprises 196 residues: MSRGGGGDRRAAPDINGLTSLKIDNLSYQTTPNDLRRTFERYGDIGDVHIPRDKYSRQSKGFGFVRFYERRDAEHALDRTDGKLVDGRELRVTLAKYDRPSDERGGRGGGGGRRRSRSPRRRSRSPRYSRSRSPRRSRSRTRSPPSRDRRDSPDRRDNSRSRSRSPPPREDGSPKERRSRSRSASRSPSRSRSNSR.

The RRM domain occupies 19-97 (TSLKIDNLSY…RELRVTLAKY (79 aa)). Positions 91 to 106 (RVTLAKYDRPSDERGG) are enriched in basic and acidic residues. The segment at 91 to 196 (RVTLAKYDRP…SPSRSRSNSR (106 aa)) is disordered. The span at 112–141 (GRRRSRSPRRRSRSPRYSRSRSPRRSRSRT) shows a compositional bias: basic residues. Basic and acidic residues-rich tracts occupy residues 145–160 (PSRDRRDSPDRRDNSR) and 167–176 (PPREDGSPKE). Low complexity predominate over residues 184-196 (ASRSPSRSRSNSR).

The protein belongs to the splicing factor SR family. Post-translationally, extensively phosphorylated on serine residues in the RS domain.

Its subcellular location is the nucleus. Its function is as follows. May play a functionally redundant role in embryogenesis. In Caenorhabditis elegans, this protein is Probable splicing factor, arginine/serine-rich 4 (rsp-4).